The primary structure comprises 401 residues: tRNA(Met) cytidine acetate ligase (401 aa).

ATP is bound by residues 7–20 (VVEYNPFHNGHLYH), Gly-101, Asn-160, and 185–186 (RI).

The protein belongs to the TmcAL family.

The protein resides in the cytoplasm. It carries out the reaction cytidine(34) in elongator tRNA(Met) + acetate + ATP = N(4)-acetylcytidine(34) in elongator tRNA(Met) + AMP + diphosphate. In terms of biological role, catalyzes the formation of N(4)-acetylcytidine (ac(4)C) at the wobble position of elongator tRNA(Met), using acetate and ATP as substrates. First activates an acetate ion to form acetyladenylate (Ac-AMP) and then transfers the acetyl group to tRNA to form ac(4)C34. This Anoxybacillus flavithermus (strain DSM 21510 / WK1) protein is tRNA(Met) cytidine acetate ligase.